A 119-amino-acid polypeptide reads, in one-letter code: Ribonuclease P protein component (119 aa).

This sequence belongs to the RnpA family. In terms of assembly, consists of a catalytic RNA component (M1 or rnpB) and a protein subunit.

It catalyses the reaction Endonucleolytic cleavage of RNA, removing 5'-extranucleotides from tRNA precursor.. Functionally, RNaseP catalyzes the removal of the 5'-leader sequence from pre-tRNA to produce the mature 5'-terminus. It can also cleave other RNA substrates such as 4.5S RNA. The protein component plays an auxiliary but essential role in vivo by binding to the 5'-leader sequence and broadening the substrate specificity of the ribozyme. The chain is Ribonuclease P protein component from Nitrosococcus oceani (strain ATCC 19707 / BCRC 17464 / JCM 30415 / NCIMB 11848 / C-107).